We begin with the raw amino-acid sequence, 201 residues long: Riboflavin synthase (201 aa).

Lumazine-binding repeat units follow at residues 1-97 and 98-197; these read MFTG…LGGH and IVQG…ERLM. 2,4-dihydroxypteridine-binding positions include 4–6, 47–49, 62–67, 101–103, lysine 136, 145–147, and 162–167; these read GIV, CLT, DVMAET, GHV, SLT, and SLIPTT.

In terms of assembly, homotrimer.

The enzyme catalyses 2 6,7-dimethyl-8-(1-D-ribityl)lumazine + H(+) = 5-amino-6-(D-ribitylamino)uracil + riboflavin. It participates in cofactor biosynthesis; riboflavin biosynthesis; riboflavin from 2-hydroxy-3-oxobutyl phosphate and 5-amino-6-(D-ribitylamino)uracil: step 2/2. In terms of biological role, catalyzes the dismutation of two molecules of 6,7-dimethyl-8-ribityllumazine, resulting in the formation of riboflavin and 5-amino-6-(D-ribitylamino)uracil. The sequence is that of Riboflavin synthase (ribE) from Mycobacterium bovis (strain ATCC BAA-935 / AF2122/97).